Reading from the N-terminus, the 165-residue chain is Phosphopantetheine adenylyltransferase (165 aa).

A substrate-binding site is contributed by Ser-10. ATP contacts are provided by residues 10-11 (SF) and His-18. Substrate is bound by residues Lys-42, Thr-79, and Arg-93. ATP is bound by residues 94-96 (GLR), Glu-104, and 129-135 (VRPITAT).

The protein belongs to the bacterial CoaD family. In terms of assembly, homohexamer. It depends on Mg(2+) as a cofactor.

It is found in the cytoplasm. The enzyme catalyses (R)-4'-phosphopantetheine + ATP + H(+) = 3'-dephospho-CoA + diphosphate. It participates in cofactor biosynthesis; coenzyme A biosynthesis; CoA from (R)-pantothenate: step 4/5. Functionally, reversibly transfers an adenylyl group from ATP to 4'-phosphopantetheine, yielding dephospho-CoA (dPCoA) and pyrophosphate. This Nitrobacter hamburgensis (strain DSM 10229 / NCIMB 13809 / X14) protein is Phosphopantetheine adenylyltransferase.